A 94-amino-acid chain; its full sequence is Co-chaperonin GroES (94 aa).

It belongs to the GroES chaperonin family. Heptamer of 7 subunits arranged in a ring. Interacts with the chaperonin GroEL.

It is found in the cytoplasm. Together with the chaperonin GroEL, plays an essential role in assisting protein folding. The GroEL-GroES system forms a nano-cage that allows encapsulation of the non-native substrate proteins and provides a physical environment optimized to promote and accelerate protein folding. GroES binds to the apical surface of the GroEL ring, thereby capping the opening of the GroEL channel. The sequence is that of Co-chaperonin GroES from Ehrlichia chaffeensis.